The sequence spans 358 residues: Peptide chain release factor 1 (358 aa).

Residue glutamine 235 is modified to N5-methylglutamine.

Belongs to the prokaryotic/mitochondrial release factor family. Post-translationally, methylated by PrmC. Methylation increases the termination efficiency of RF1.

Its subcellular location is the cytoplasm. Peptide chain release factor 1 directs the termination of translation in response to the peptide chain termination codons UAG and UAA. The protein is Peptide chain release factor 1 of Neisseria gonorrhoeae (strain ATCC 700825 / FA 1090).